The sequence spans 358 residues: Sulfate/thiosulfate import ATP-binding protein CysA 1 (358 aa).

The ABC transporter domain maps to 3-237 (IQVENIRKAF…PASAFVYGFL (235 aa)). Residue 35–42 (GPSGCGKT) coordinates ATP.

The protein belongs to the ABC transporter superfamily. Sulfate/tungstate importer (TC 3.A.1.6) family. As to quaternary structure, the complex is composed of two ATP-binding proteins (CysA), two transmembrane proteins (CysT and CysW) and a solute-binding protein (CysP).

Its subcellular location is the cell inner membrane. It carries out the reaction sulfate(out) + ATP + H2O = sulfate(in) + ADP + phosphate + H(+). It catalyses the reaction thiosulfate(out) + ATP + H2O = thiosulfate(in) + ADP + phosphate + H(+). Part of the ABC transporter complex CysAWTP involved in sulfate/thiosulfate import. Responsible for energy coupling to the transport system. This Chromobacterium violaceum (strain ATCC 12472 / DSM 30191 / JCM 1249 / CCUG 213 / NBRC 12614 / NCIMB 9131 / NCTC 9757 / MK) protein is Sulfate/thiosulfate import ATP-binding protein CysA 1.